The sequence spans 261 residues: Transcription antitermination protein NusB (261 aa).

The segment at 168–261 is disordered; the sequence is ARVEDQPSDD…DLHKKDTTDD (94 aa). Over residues 217–228 the composition is skewed to polar residues; the sequence is VDTTSGNASDPE. Residues 242 to 261 show a composition bias toward basic and acidic residues; that stretch reads PTSKDHELATDLHKKDTTDD.

This sequence belongs to the NusB family.

Its function is as follows. Involved in transcription antitermination. Required for transcription of ribosomal RNA (rRNA) genes. Binds specifically to the boxA antiterminator sequence of the ribosomal RNA (rrn) operons. The protein is Transcription antitermination protein NusB of Cutibacterium acnes (strain DSM 16379 / KPA171202) (Propionibacterium acnes).